The sequence spans 239 residues: Exosome complex component Rrp4 (239 aa).

The S1 motif domain occupies 67–139; that stretch reads GDFVVGIVEE…PVQRVELSLL (73 aa). The region spanning 151 to 217 is the KH domain; the sequence is QGGQVVEIDP…LAVRAIREIE (67 aa).

The protein belongs to the RRP4 family. As to quaternary structure, component of the archaeal exosome complex. Forms a trimer of Rrp4 and/or Csl4 subunits. The trimer associates with a hexameric ring-like arrangement composed of 3 Rrp41-Rrp42 heterodimers.

The protein resides in the cytoplasm. Non-catalytic component of the exosome, which is a complex involved in RNA degradation. Increases the RNA binding and the efficiency of RNA degradation. Confers strong poly(A) specificity to the exosome. The protein is Exosome complex component Rrp4 of Methanopyrus kandleri (strain AV19 / DSM 6324 / JCM 9639 / NBRC 100938).